A 277-amino-acid chain; its full sequence is 2-dehydro-3-deoxyphosphooctonate aldolase (277 aa).

This sequence belongs to the KdsA family.

It is found in the cytoplasm. The catalysed reaction is D-arabinose 5-phosphate + phosphoenolpyruvate + H2O = 3-deoxy-alpha-D-manno-2-octulosonate-8-phosphate + phosphate. It participates in carbohydrate biosynthesis; 3-deoxy-D-manno-octulosonate biosynthesis; 3-deoxy-D-manno-octulosonate from D-ribulose 5-phosphate: step 2/3. Its pathway is bacterial outer membrane biogenesis; lipopolysaccharide biosynthesis. The sequence is that of 2-dehydro-3-deoxyphosphooctonate aldolase from Brucella canis (strain ATCC 23365 / NCTC 10854 / RM-666).